The following is a 610-amino-acid chain: Synaptotagmin-like protein 3 (610 aa).

One can recognise a RabBD domain in the interval 4 to 123 (EIDLSALKEL…IKTGEWFYEE (120 aa)). A disordered region spans residues 219 to 239 (RQCVGQTERRSQSDTAVNVTT). C2 domains lie at 306–428 (VTGE…TQSF) and 462–603 (RPRK…NLWT).

Monomer. Binds NRXN1. Binds RAB27A that has been activated by GTP-binding via its N-terminus.

The protein localises to the endomembrane system. Its function is as follows. May act as Rab effector protein and play a role in vesicle trafficking. Binds phospholipids in the presence of calcium ions. The polypeptide is Synaptotagmin-like protein 3 (SYTL3) (Homo sapiens (Human)).